Here is a 469-residue protein sequence, read N- to C-terminus: ATP synthase subunit beta (469 aa).

156–163 (GGAGVGKT) serves as a coordination point for ATP.

Belongs to the ATPase alpha/beta chains family. As to quaternary structure, F-type ATPases have 2 components, CF(1) - the catalytic core - and CF(0) - the membrane proton channel. CF(1) has five subunits: alpha(3), beta(3), gamma(1), delta(1), epsilon(1). CF(0) has three main subunits: a(1), b(2) and c(9-12). The alpha and beta chains form an alternating ring which encloses part of the gamma chain. CF(1) is attached to CF(0) by a central stalk formed by the gamma and epsilon chains, while a peripheral stalk is formed by the delta and b chains.

Its subcellular location is the cell membrane. It carries out the reaction ATP + H2O + 4 H(+)(in) = ADP + phosphate + 5 H(+)(out). Its function is as follows. Produces ATP from ADP in the presence of a proton gradient across the membrane. The catalytic sites are hosted primarily by the beta subunits. This chain is ATP synthase subunit beta, found in Bacillus anthracis (strain CDC 684 / NRRL 3495).